The following is a 112-amino-acid chain: Large ribosomal subunit protein P1 (112 aa).

The span at 71–90 (PAQAAAAAPAGGAPAAAAPA) shows a compositional bias: low complexity. The tract at residues 71 to 112 (PAQAAAAAPAGGAPAAAAPAESKEGRRSQGESDDDMGFGLLD) is disordered. The segment covering 91–100 (ESKEGRRSQG) has biased composition (basic and acidic residues).

This sequence belongs to the eukaryotic ribosomal protein P1/P2 family. P1 and P2 exist as dimers at the large ribosomal subunit.

Functionally, plays an important role in the elongation step of protein synthesis. This chain is Large ribosomal subunit protein P1 (rpl-21), found in Oscheius tipulae.